The primary structure comprises 413 residues: Glycosyl hydrolase family 109 protein 2 (413 aa).

Residues N26–R27, D48, W96–H99, E116–V117, and N145 contribute to the NAD(+) site. Residue Y174 coordinates substrate. NAD(+) contacts are provided by residues Y191–W195 and Y208. Substrate contacts are provided by residues Y208–H211 and Y290.

It belongs to the Gfo/Idh/MocA family. Glycosyl hydrolase 109 subfamily. NAD(+) is required as a cofactor.

Glycosidase. The chain is Glycosyl hydrolase family 109 protein 2 from Phocaeicola vulgatus (strain ATCC 8482 / DSM 1447 / JCM 5826 / CCUG 4940 / NBRC 14291 / NCTC 11154) (Bacteroides vulgatus).